Reading from the N-terminus, the 126-residue chain is Fluoride-specific ion channel FluC (126 aa).

4 helical membrane passes run 7–24 (LWVS…YFLS), 35–55 (FPWG…LFLV), 69–89 (LLIA…AYES), and 98–118 (WGLF…AVLG). Na(+)-binding residues include Gly77 and Thr80.

Belongs to the fluoride channel Fluc/FEX (TC 1.A.43) family.

It localises to the cell inner membrane. The enzyme catalyses fluoride(in) = fluoride(out). Na(+) is not transported, but it plays an essential structural role and its presence is essential for fluoride channel function. Its function is as follows. Fluoride-specific ion channel. Important for reducing fluoride concentration in the cell, thus reducing its toxicity. In Koribacter versatilis (strain Ellin345), this protein is Fluoride-specific ion channel FluC.